We begin with the raw amino-acid sequence, 523 residues long: Bifunctional purine biosynthesis protein PurH (523 aa).

Positions 1–150 (MSDVVPVRNA…KNHGDVAIAT (150 aa)) constitute an MGS-like domain.

It belongs to the PurH family.

It carries out the reaction (6R)-10-formyltetrahydrofolate + 5-amino-1-(5-phospho-beta-D-ribosyl)imidazole-4-carboxamide = 5-formamido-1-(5-phospho-D-ribosyl)imidazole-4-carboxamide + (6S)-5,6,7,8-tetrahydrofolate. The catalysed reaction is IMP + H2O = 5-formamido-1-(5-phospho-D-ribosyl)imidazole-4-carboxamide. Its pathway is purine metabolism; IMP biosynthesis via de novo pathway; 5-formamido-1-(5-phospho-D-ribosyl)imidazole-4-carboxamide from 5-amino-1-(5-phospho-D-ribosyl)imidazole-4-carboxamide (10-formyl THF route): step 1/1. It functions in the pathway purine metabolism; IMP biosynthesis via de novo pathway; IMP from 5-formamido-1-(5-phospho-D-ribosyl)imidazole-4-carboxamide: step 1/1. This is Bifunctional purine biosynthesis protein PurH from Rhodopirellula baltica (strain DSM 10527 / NCIMB 13988 / SH1).